Reading from the N-terminus, the 98-residue chain is Small ribosomal subunit protein bS6 (98 aa).

The protein belongs to the bacterial ribosomal protein bS6 family.

Functionally, binds together with bS18 to 16S ribosomal RNA. In Lactobacillus acidophilus (strain ATCC 700396 / NCK56 / N2 / NCFM), this protein is Small ribosomal subunit protein bS6.